Here is a 105-residue protein sequence, read N- to C-terminus: Large ribosomal subunit protein bL21 (105 aa).

This sequence belongs to the bacterial ribosomal protein bL21 family. In terms of assembly, part of the 50S ribosomal subunit. Contacts protein L20.

Functionally, this protein binds to 23S rRNA in the presence of protein L20. This chain is Large ribosomal subunit protein bL21, found in Porphyromonas gingivalis (strain ATCC BAA-308 / W83).